A 359-amino-acid polypeptide reads, in one-letter code: MKKYLALALIAPLLISCSTTKKGDTYNEAWVKDTNGFDILMGQFAHNIENIWGFKEVVIAGPKDYVKYTDQYQTRSHINFDDGTITIETIAGTEPAAHLRRAIIKTLLMGDDPSSVDLYSDVDDITISKEPFLYGQVVDNTGQPIRWEGRASNFADYLLKNRLKSRSNGLRIIYSVTINMVPNHLDKRAHKYLGMVRQASRKYGVDESLILAIMQTESSFNPYAVSRSDALGLMQVVQHTAGKDVFRSQGKSGTPSRSFLFDPASNIDIGTAYLAMLNNVYLGGIDNPTSRRYAVITAYNGGAGSVLRVFSNDKIQAANIINTMTPGDVYQTLTTRHPSAESRRYLYKVNTAQKSYRRR.

Residues 1–16 (MKKYLALALIAPLLIS) form the signal peptide. Cysteine 17 carries the N-palmitoyl cysteine lipid modification. The S-diacylglycerol cysteine moiety is linked to residue cysteine 17.

Belongs to the transglycosylase Slt family.

It localises to the cell outer membrane. The enzyme catalyses Exolytic cleavage of the (1-&gt;4)-beta-glycosidic linkage between N-acetylmuramic acid (MurNAc) and N-acetylglucosamine (GlcNAc) residues in peptidoglycan, from either the reducing or the non-reducing ends of the peptidoglycan chains, with concomitant formation of a 1,6-anhydrobond in the MurNAc residue.. Murein-degrading enzyme. May play a role in recycling of muropeptides during cell elongation and/or cell division. This Escherichia coli (strain SMS-3-5 / SECEC) protein is Membrane-bound lytic murein transglycosylase C.